Reading from the N-terminus, the 240-residue chain is MTPTIELICGHRSIRHFTDEPISEAQREAIINSARATSSSSFLQCSSIIRITDKALREELVTLTGGQKHVAQAAEFWVFCADFNRHLQICPDAQLGLAEQLLLGVVDTAMMAQNALIAAESLGLGGVYIGGLRNNIEAVTKLLKLPQHVLPLFGLCLGWPADNPDLKPRLPASILVHENSYQPLDKGALAQYDEQLAEYYLTRGSNNRRDTWSDHIRRTIIKESRPFILDYLHKQGWATR.

FMN contacts are provided by residues 11–15 (HRSIR), Ser39, Gln67, 128–131 (YIGG), and 167–169 (KPR).

It belongs to the flavin oxidoreductase frp family. Homodimer. Requires FMN as cofactor.

Its function is as follows. Catalyzes the reduction of nitroaromatic compounds using NADPH. Has a broad electron acceptor specificity. Reduces nitrofurazone by a ping-pong bi-bi mechanism possibly to generate a two-electron transfer product. Major oxygen-insensitive nitroreductase in E.coli. In Escherichia coli (strain K12), this protein is Oxygen-insensitive NADPH nitroreductase (nfsA).